Reading from the N-terminus, the 234-residue chain is Phosphoribosylformylglycinamidine synthase subunit PurQ (234 aa).

The 230-residue stretch at 5 to 234 (TVGIVVFPGS…ESLFAHLAGA (230 aa)) folds into the Glutamine amidotransferase type-1 domain. The Nucleophile role is filled by Cys-89. Active-site residues include His-206 and Glu-208.

Part of the FGAM synthase complex composed of 1 PurL, 1 PurQ and 2 PurS subunits.

The protein localises to the cytoplasm. The enzyme catalyses N(2)-formyl-N(1)-(5-phospho-beta-D-ribosyl)glycinamide + L-glutamine + ATP + H2O = 2-formamido-N(1)-(5-O-phospho-beta-D-ribosyl)acetamidine + L-glutamate + ADP + phosphate + H(+). It carries out the reaction L-glutamine + H2O = L-glutamate + NH4(+). Its pathway is purine metabolism; IMP biosynthesis via de novo pathway; 5-amino-1-(5-phospho-D-ribosyl)imidazole from N(2)-formyl-N(1)-(5-phospho-D-ribosyl)glycinamide: step 1/2. Functionally, part of the phosphoribosylformylglycinamidine synthase complex involved in the purines biosynthetic pathway. Catalyzes the ATP-dependent conversion of formylglycinamide ribonucleotide (FGAR) and glutamine to yield formylglycinamidine ribonucleotide (FGAM) and glutamate. The FGAM synthase complex is composed of three subunits. PurQ produces an ammonia molecule by converting glutamine to glutamate. PurL transfers the ammonia molecule to FGAR to form FGAM in an ATP-dependent manner. PurS interacts with PurQ and PurL and is thought to assist in the transfer of the ammonia molecule from PurQ to PurL. The sequence is that of Phosphoribosylformylglycinamidine synthase subunit PurQ from Chlorobaculum tepidum (strain ATCC 49652 / DSM 12025 / NBRC 103806 / TLS) (Chlorobium tepidum).